The sequence spans 286 residues: Pyridoxal kinase PdxY (286 aa).

Substrate-binding positions include S9 and 44 to 45 (TQ). Residues D111, A143, E148, K181, and 208-211 (RPLV) each bind ATP. A substrate-binding site is contributed by D222.

Belongs to the pyridoxine kinase family. PdxY subfamily. In terms of assembly, homodimer. It depends on Mg(2+) as a cofactor.

It catalyses the reaction pyridoxal + ATP = pyridoxal 5'-phosphate + ADP + H(+). It functions in the pathway cofactor metabolism; pyridoxal 5'-phosphate salvage; pyridoxal 5'-phosphate from pyridoxal: step 1/1. In terms of biological role, pyridoxal kinase involved in the salvage pathway of pyridoxal 5'-phosphate (PLP). Catalyzes the phosphorylation of pyridoxal to PLP. The protein is Pyridoxal kinase PdxY of Pectobacterium atrosepticum (strain SCRI 1043 / ATCC BAA-672) (Erwinia carotovora subsp. atroseptica).